The sequence spans 1235 residues: Phosphorylase b kinase regulatory subunit alpha, liver isoform (1235 aa).

Residues 636-655 form a disordered region; the sequence is FSPDSEPDLGGYLEDSSPQE. Phosphoserine occurs at positions 695, 729, and 735. Positions 807–837 are calmodulin-binding; it reads LSELYGKAGLNQEWSLIRYISGLLRKKVEVL. Ser-983, Ser-1015, and Ser-1044 each carry phosphoserine. A disordered region spans residues 1033-1060; sequence SIKSVRSSTPSSPTGTSSTDSGGQHLGW. Low complexity predominate over residues 1039–1055; it reads SSTPSSPTGTSSTDSGG. The tract at residues 1059 to 1099 is calmodulin-binding; it reads GWGEQQGQWLRRRRLDGAINRVPVGFYQKVWKILQKCHGLS. Residue Cys-1232 is the site of S-farnesyl cysteine attachment.

It belongs to the phosphorylase b kinase regulatory chain family. Hexadecamer of 4 heterotetramers, each composed of alpha, beta, gamma, and delta subunits. Alpha (PHKA1 or PHKA2) and beta (PHKB) are regulatory subunits, gamma (PHKG1 or PHKG2) is the catalytic subunit, and delta is calmodulin. Post-translationally, although the final Cys may be farnesylated, the terminal tripeptide is probably not removed, and the C-terminus is not methylated.

The protein localises to the cell membrane. Its pathway is glycan biosynthesis; glycogen metabolism. By phosphorylation of various serine residues and by calcium. Phosphorylase b kinase catalyzes the phosphorylation of serine in certain substrates, including troponin I. The alpha chain may bind calmodulin. The chain is Phosphorylase b kinase regulatory subunit alpha, liver isoform (Phka2) from Mus musculus (Mouse).